We begin with the raw amino-acid sequence, 264 residues long: 3-methyl-2-oxobutanoate hydroxymethyltransferase (264 aa).

Asp-41 and Asp-80 together coordinate Mg(2+). 3-methyl-2-oxobutanoate is bound by residues 41 to 42 (DS), Asp-80, and Lys-109. Residue Glu-111 coordinates Mg(2+). The active-site Proton acceptor is the Glu-178.

The protein belongs to the PanB family. In terms of assembly, homodecamer; pentamer of dimers. Mg(2+) serves as cofactor.

The protein localises to the cytoplasm. The catalysed reaction is 3-methyl-2-oxobutanoate + (6R)-5,10-methylene-5,6,7,8-tetrahydrofolate + H2O = 2-dehydropantoate + (6S)-5,6,7,8-tetrahydrofolate. It functions in the pathway cofactor biosynthesis; (R)-pantothenate biosynthesis; (R)-pantoate from 3-methyl-2-oxobutanoate: step 1/2. Catalyzes the reversible reaction in which hydroxymethyl group from 5,10-methylenetetrahydrofolate is transferred onto alpha-ketoisovalerate to form ketopantoate. This Thermosipho melanesiensis (strain DSM 12029 / CIP 104789 / BI429) protein is 3-methyl-2-oxobutanoate hydroxymethyltransferase.